We begin with the raw amino-acid sequence, 171 residues long: MIYPYKEHKPDIHPTAFIADNATITGDVVIGEQSSIWFSVVIRGDVAPTRIGNRVNIQDLSCLHQSPNKTLLIEDDATIGHQVTLHSAVIRKNALIGMGSIILDGAEIGEGAFIGAGSLVPPGKIIPPGHLAFGRPAKVIRPLTEEDRKDMQRIRSEYVEKGQYYKFLQQT.

It belongs to the transferase hexapeptide repeat family.

This is an uncharacterized protein from Bacillus subtilis (strain 168).